A 330-amino-acid polypeptide reads, in one-letter code: Malate dehydrogenase (330 aa).

11 to 17 (GGAGQIA) contributes to the NAD(+) binding site. Arginine 92 and arginine 98 together coordinate substrate. NAD(+)-binding positions include asparagine 105, glutamine 112, and 129 to 131 (VGN). Positions 131 and 162 each coordinate substrate. Catalysis depends on histidine 187, which acts as the Proton acceptor.

This sequence belongs to the LDH/MDH superfamily. MDH type 2 family.

The enzyme catalyses (S)-malate + NAD(+) = oxaloacetate + NADH + H(+). Functionally, catalyzes the reversible oxidation of malate to oxaloacetate. The sequence is that of Malate dehydrogenase from Protochlamydia amoebophila (strain UWE25).